The primary structure comprises 486 residues: MNDQSMTIRGKDRYKSGVMAYKKMGYWEPDYVPKDTDVIALFRVTPQDGVDPIEAAAAVAGESSTATWTVVWTDRLTAAEKYRAKCYRVDPVPNSPGQYFAYIAYDLDLFEPGSISNLTASIIGNVFGFKPLKGLRLEDMRLPVAYVKTFQGPATGIVVERERLDKFGRPLLGATVKPKLGLSGRNYGRVVYEALKGGLDFTKDDENINSQPFMHWRERFLYCMEAVNRAQAASGEVKGTYLNVTAATMEDMYERAEFAKELGSCIVMIDLVIGYTAIQSMAKWARKNDMILHLHRAGHSTYTRQKNHGVSFRVIAKWMRLAGVDHIHAGTVVGKLEGDPNTTRGYYDICREEFNPTKLEHGIFFDQNWASLNKMMPVASGGIHAGQMHQLLDLLGEDVVLQFGGGTIGHPMGIQAGAIANRVALEAMILARNEGRDYVAEGPEILAKAAATCTPLKSALEVWKDVTFNYESTDAPDFVPTAIAAV.

Substrate is bound by residues asparagine 125 and threonine 175. Lysine 177 acts as the Proton acceptor in catalysis. Position 179 (lysine 179) interacts with substrate. Residues lysine 203, aspartate 205, and glutamate 206 each contribute to the Mg(2+) site. Lysine 203 carries the post-translational modification N6-carboxylysine. Residue histidine 295 is the Proton acceptor of the active site. Residues arginine 296, histidine 328, and serine 380 each coordinate substrate.

It belongs to the RuBisCO large chain family. Type I subfamily. Heterohexadecamer of 8 large chains and 8 small chains. Requires Mg(2+) as cofactor.

It carries out the reaction 2 (2R)-3-phosphoglycerate + 2 H(+) = D-ribulose 1,5-bisphosphate + CO2 + H2O. The enzyme catalyses D-ribulose 1,5-bisphosphate + O2 = 2-phosphoglycolate + (2R)-3-phosphoglycerate + 2 H(+). RuBisCO catalyzes two reactions: the carboxylation of D-ribulose 1,5-bisphosphate, the primary event in carbon dioxide fixation, as well as the oxidative fragmentation of the pentose substrate. Both reactions occur simultaneously and in competition at the same active site. The polypeptide is Ribulose bisphosphate carboxylase large chain (Afipia carboxidovorans (strain ATCC 49405 / DSM 1227 / KCTC 32145 / OM5) (Oligotropha carboxidovorans)).